The chain runs to 149 residues: 3-dehydroquinate dehydratase (149 aa).

Catalysis depends on tyrosine 24, which acts as the Proton acceptor. Substrate-binding residues include asparagine 76, histidine 82, and aspartate 89. Histidine 102 (proton donor) is an active-site residue. Residues 103–104 (LS) and arginine 113 contribute to the substrate site.

Belongs to the type-II 3-dehydroquinase family. In terms of assembly, homododecamer.

It carries out the reaction 3-dehydroquinate = 3-dehydroshikimate + H2O. Its pathway is metabolic intermediate biosynthesis; chorismate biosynthesis; chorismate from D-erythrose 4-phosphate and phosphoenolpyruvate: step 3/7. Catalyzes a trans-dehydration via an enolate intermediate. The sequence is that of 3-dehydroquinate dehydratase from Acinetobacter baylyi (strain ATCC 33305 / BD413 / ADP1).